We begin with the raw amino-acid sequence, 293 residues long: SAGA-associated factor 29 (293 aa).

Residues leucine 3 to glutamate 86 adopt a coiled-coil conformation. The region spanning glycine 152 to lysine 293 is the SGF29 C-terminal domain. Histone H3K4me3 N-terminus binding regions lie at residues aspartate 194–aspartate 196 and glutamine 240–cysteine 243. The segment at phenylalanine 264–aspartate 266 is histone H3K4me3 binding. Lysine 288 is subject to N6-acetyllysine.

This sequence belongs to the SGF29 family. Interacts with dimethylated and trimethylated 'Lys-4' of histone H3 (H3K4me2 and H3K4me3), with a preference for the trimethylated form (H3K4me3). Component of some SAGA-type complexes. Component of the ADA2A-containing complex (ATAC), composed of KAT14, KAT2A, TADA2L, TADA3L, ZZ3, MBIP, WDR5, YEATS2, CCDC101 and DR1. Interacts with (methylated) CGAS. Interacts with TADA3L, GCN5L2, SUPT3H and MYC.

The protein localises to the nucleus. Functionally, chromatin reader component of some histone acetyltransferase (HAT) SAGA-type complexes like the TFTC-HAT, ATAC or STAGA complexes. SGF29 specifically recognizes and binds methylated 'Lys-4' of histone H3 (H3K4me), with a preference for trimethylated form (H3K4me3). In the SAGA-type complexes, SGF29 is required to recruit complexes to H3K4me. Involved in the response to endoplasmic reticulum (ER) stress by recruiting the SAGA complex to H3K4me, thereby promoting histone H3 acetylation and cell survival. Also binds non-histone proteins that are methylated on Lys residues: specifically recognizes and binds CGAS monomethylated on 'Lys-491'. In Mus musculus (Mouse), this protein is SAGA-associated factor 29.